A 293-amino-acid chain; its full sequence is Protease HtpX (293 aa).

Helical transmembrane passes span Ile-4–Leu-24 and Ala-33–Met-53. His-139 provides a ligand contact to Zn(2+). Glu-140 is an active-site residue. His-143 is a binding site for Zn(2+). Helical transmembrane passes span Val-158 to Met-178 and Leu-193 to Ile-213. Glu-222 provides a ligand contact to Zn(2+).

The protein belongs to the peptidase M48B family. Zn(2+) is required as a cofactor.

It localises to the cell inner membrane. The chain is Protease HtpX from Sodalis glossinidius (strain morsitans).